The chain runs to 372 residues: NAD(P)H-quinone oxidoreductase subunit 1 (372 aa).

8 helical membrane-spanning segments follow: residues 27 to 47, 97 to 117, 128 to 148, 176 to 196, 204 to 224, 270 to 290, 308 to 328, and 351 to 371; these read LLWL…GVLV, LLFT…WLII, VGIG…GLLM, LALA…IDIV, FLSW…ICAL, LLVS…ELIA, SLGI…AILL, and ISLV…FAFG.

The protein belongs to the complex I subunit 1 family. In terms of assembly, NDH-1 is composed of at least 11 different subunits.

The protein localises to the cellular thylakoid membrane. The enzyme catalyses a plastoquinone + NADH + (n+1) H(+)(in) = a plastoquinol + NAD(+) + n H(+)(out). It carries out the reaction a plastoquinone + NADPH + (n+1) H(+)(in) = a plastoquinol + NADP(+) + n H(+)(out). NDH-1 shuttles electrons from an unknown electron donor, via FMN and iron-sulfur (Fe-S) centers, to quinones in the respiratory and/or the photosynthetic chain. The immediate electron acceptor for the enzyme in this species is believed to be plastoquinone. Couples the redox reaction to proton translocation, and thus conserves the redox energy in a proton gradient. The protein is NAD(P)H-quinone oxidoreductase subunit 1 of Prochlorococcus marinus (strain SARG / CCMP1375 / SS120).